Here is a 251-residue protein sequence, read N- to C-terminus: Hydroxyacylglutathione hydrolase (251 aa).

Residues His-53, His-55, Asp-57, His-58, His-110, Asp-127, and His-165 each contribute to the Zn(2+) site.

The protein belongs to the metallo-beta-lactamase superfamily. Glyoxalase II family. Monomer. Zn(2+) serves as cofactor.

The catalysed reaction is an S-(2-hydroxyacyl)glutathione + H2O = a 2-hydroxy carboxylate + glutathione + H(+). Its pathway is secondary metabolite metabolism; methylglyoxal degradation; (R)-lactate from methylglyoxal: step 2/2. Its function is as follows. Thiolesterase that catalyzes the hydrolysis of S-D-lactoyl-glutathione to form glutathione and D-lactic acid. In Escherichia coli (strain SE11), this protein is Hydroxyacylglutathione hydrolase.